The sequence spans 1319 residues: Protein Jumonji (1319 aa).

Basic residues predominate over residues 1–11 (MSKERPKRNII). Disordered stretches follow at residues 1–23 (MSKERPKRNIIQKKYDDNDGMPW), 50–130 (DGID…PSLP), 173–265 (DEED…NTNG), 351–382 (YSNNHHHNSHHATSNGHGRPQLSHSGKAQSIN), 396–478 (HKMT…KALN), 499–537 (PIQKTGPAPPPSPPAAPASPSMPQNPAIPEPARQRPKRA), and 549–599 (QQRA…RSRA). Positions 61–70 (ASLSNGQLNG) are enriched in polar residues. The span at 74 to 88 (GHKEDGSRSQRKDGG) shows a compositional bias: basic and acidic residues. A Nuclear localization signal motif is present at residues 96–102 (PAKKRPR). The span at 98–107 (KKRPRLHAQR) shows a compositional bias: basic residues. The span at 109–121 (FAQSQPNSPSNTP) shows a compositional bias: polar residues. A compositionally biased stretch (acidic residues) spans 173 to 185 (DEEDLEDEDEIEE). The segment covering 191-200 (VASTSCQSTP) has biased composition (polar residues). The span at 221-251 (KDKELTPRSKARESSVGRDRSERCDESEISH) shows a compositional bias: basic and acidic residues. Residues 372–382 (LSHSGKAQSIN) show a composition bias toward polar residues. Residues 413 to 424 (SAREEEVVDRPV) are compositionally biased toward basic and acidic residues. Residues 505-515 (PAPPPSPPAAP) show a composition bias toward pro residues. Composition is skewed to low complexity over residues 516 to 525 (ASPSMPQNPA) and 554 to 570 (TNPTLNRTTSTTSASKS). A compositionally biased stretch (basic and acidic residues) spans 583–598 (RLDRDRERERERERSR). The region spanning 607-648 (VPIFKPSSREFQDPLVYLDSFREQVESCGLCRVLPPTDWRPE) is the JmjN domain. In terms of domain architecture, ARID spans 671–779 (WGPNVQKLAC…FLLSYDLLSP (109 aa)). A compositionally biased stretch (basic and acidic residues) spans 798–811 (RKRGPLEGHSDNGH). Positions 798-818 (RKRGPLEGHSDNGHHSLALPR) are disordered. The GSGFP motif signature appears at 944 to 948 (GSGFP). The JmjC domain occupies 954–1118 (PFSKHGWNLT…LGYEAAKDLK (165 aa)).

Belongs to the JARID2 family. Associates with the PRC2 complex.

It is found in the nucleus. In terms of biological role, regulator of histone methyltransferase complexes that plays an essential role in embryonic development. Acts by modulating histone methyltransferase activity and promoting the recruitment of histone methyltransferase complexes to their target genes. Binds DNA and mediates the recruitment of the PRC2 complex to target genes in embryonic stem cells. Does not have histone demethylase activity but regulates activity of various histone methyltransferase complexes. In embryonic stem cells, it associates with the PRC2 complex and inhibits trimethylation of 'Lys-27' of histone H3 (H3K27me3) by the PRC2 complex, thereby playing a key role in differentiation of embryonic stem cells and normal development. This is Protein Jumonji (jarid2b) from Danio rerio (Zebrafish).